Consider the following 498-residue polypeptide: Glycerol kinase (498 aa).

Threonine 14 serves as a coordination point for ADP. ATP-binding residues include threonine 14, threonine 15, and serine 16. Residue threonine 14 coordinates sn-glycerol 3-phosphate. Residue arginine 18 participates in ADP binding. The sn-glycerol 3-phosphate site is built by arginine 84, glutamate 85, tyrosine 136, and aspartate 243. The glycerol site is built by arginine 84, glutamate 85, tyrosine 136, aspartate 243, and glutamine 244. The ADP site is built by threonine 265 and glycine 308. Positions 265, 308, 312, and 409 each coordinate ATP. The ADP site is built by glycine 409 and asparagine 413.

The protein belongs to the FGGY kinase family.

It catalyses the reaction glycerol + ATP = sn-glycerol 3-phosphate + ADP + H(+). It participates in polyol metabolism; glycerol degradation via glycerol kinase pathway; sn-glycerol 3-phosphate from glycerol: step 1/1. Its activity is regulated as follows. Inhibited by fructose 1,6-bisphosphate (FBP). Its function is as follows. Key enzyme in the regulation of glycerol uptake and metabolism. Catalyzes the phosphorylation of glycerol to yield sn-glycerol 3-phosphate. The polypeptide is Glycerol kinase (Shewanella frigidimarina (strain NCIMB 400)).